The sequence spans 103 residues: Cell division suppressor protein YneA (103 aa).

One can recognise a LysM domain in the interval 36–87 (VKIEVQEGDTLWELADRIKGGKTADKHKFIEWVADKNNLPTSVIKPGDVLIL).

Belongs to the YneA family.

It localises to the cytoplasm. In terms of biological role, inhibits cell division during the SOS response. Affects a later stage of the cell division protein assembly, after the assembly of the Z ring, by probably suppressing recruitment of FtsL and/or DivIC to the division machinery. This is Cell division suppressor protein YneA from Bacillus licheniformis (strain ATCC 14580 / DSM 13 / JCM 2505 / CCUG 7422 / NBRC 12200 / NCIMB 9375 / NCTC 10341 / NRRL NRS-1264 / Gibson 46).